Consider the following 728-residue polypeptide: Polyribonucleotide nucleotidyltransferase (728 aa).

Positions 513 and 519 each coordinate Mg(2+). One can recognise a KH domain in the interval 580–640 (PKVKMILIKP…EIVDLTVTYI (61 aa)). Positions 650–724 (ENVYEVKILR…ERGQIDLSKK (75 aa)) constitute an S1 motif domain.

This sequence belongs to the polyribonucleotide nucleotidyltransferase family. The cofactor is Mg(2+).

Its subcellular location is the cytoplasm. It carries out the reaction RNA(n+1) + phosphate = RNA(n) + a ribonucleoside 5'-diphosphate. Its function is as follows. Involved in mRNA degradation. Catalyzes the phosphorolysis of single-stranded polyribonucleotides processively in the 3'- to 5'-direction. In Phytoplasma mali (strain AT), this protein is Polyribonucleotide nucleotidyltransferase.